We begin with the raw amino-acid sequence, 141 residues long: Large ribosomal subunit protein uL11 (141 aa).

The protein belongs to the universal ribosomal protein uL11 family. Part of the ribosomal stalk of the 50S ribosomal subunit. Interacts with L10 and the large rRNA to form the base of the stalk. L10 forms an elongated spine to which L12 dimers bind in a sequential fashion forming a multimeric L10(L12)X complex. One or more lysine residues are methylated.

Forms part of the ribosomal stalk which helps the ribosome interact with GTP-bound translation factors. This Chlorobium chlorochromatii (strain CaD3) protein is Large ribosomal subunit protein uL11.